Reading from the N-terminus, the 254-residue chain is Probable triosephosphate isomerase 2 (254 aa).

9-11 contributes to the substrate binding site; that stretch reads NMK. H96 acts as the Electrophile in catalysis. E168 (proton acceptor) is an active-site residue. Substrate is bound by residues G174 and S212.

Belongs to the triosephosphate isomerase family. In terms of assembly, homodimer.

The protein localises to the cytoplasm. It carries out the reaction D-glyceraldehyde 3-phosphate = dihydroxyacetone phosphate. The protein operates within carbohydrate biosynthesis; gluconeogenesis. Its pathway is carbohydrate degradation; glycolysis; D-glyceraldehyde 3-phosphate from glycerone phosphate: step 1/1. Its function is as follows. Involved in the gluconeogenesis. Catalyzes stereospecifically the conversion of dihydroxyacetone phosphate (DHAP) to D-glyceraldehyde-3-phosphate (G3P). This chain is Probable triosephosphate isomerase 2, found in Listeria monocytogenes serovar 1/2a (strain ATCC BAA-679 / EGD-e).